Reading from the N-terminus, the 109-residue chain is T-cell surface glycoprotein CD1b (109 aa).

Residues 1-18 (MLLLPLLLLAGRFPGGDN) form the signal peptide. N38 and N75 each carry an N-linked (GlcNAc...) asparagine glycan.

Heterodimer with B2M (beta-2-microglobulin). Interacts with saposin C. In terms of tissue distribution, expressed on cortical thymocytes, on certain T-cell leukemias, and in various other tissues.

The protein localises to the cell membrane. It localises to the endosome membrane. It is found in the lysosome membrane. Antigen-presenting protein that binds self and non-self lipid and glycolipid antigens and presents them to T-cell receptors on natural killer T-cells. This chain is T-cell surface glycoprotein CD1b (CD1B), found in Oryctolagus cuniculus (Rabbit).